Consider the following 162-residue polypeptide: UPF0114 protein Pput_0713 (162 aa).

A run of 4 helical transmembrane segments spans residues 15 to 35, 53 to 73, 109 to 126, and 136 to 156; these read LLAP…LKFF, LILV…LVMV, VAAS…RVFM, and LMWY…MGYL.

This sequence belongs to the UPF0114 family.

The protein localises to the cell membrane. The protein is UPF0114 protein Pput_0713 of Pseudomonas putida (strain ATCC 700007 / DSM 6899 / JCM 31910 / BCRC 17059 / LMG 24140 / F1).